Here is a 481-residue protein sequence, read N- to C-terminus: UDP-N-acetylmuramoylalanine--D-glutamate ligase (481 aa).

108-114 contacts ATP; sequence GTNGKTS.

This sequence belongs to the MurCDEF family.

It localises to the cytoplasm. The enzyme catalyses UDP-N-acetyl-alpha-D-muramoyl-L-alanine + D-glutamate + ATP = UDP-N-acetyl-alpha-D-muramoyl-L-alanyl-D-glutamate + ADP + phosphate + H(+). It functions in the pathway cell wall biogenesis; peptidoglycan biosynthesis. Its function is as follows. Cell wall formation. Catalyzes the addition of glutamate to the nucleotide precursor UDP-N-acetylmuramoyl-L-alanine (UMA). The sequence is that of UDP-N-acetylmuramoylalanine--D-glutamate ligase from Bifidobacterium longum subsp. infantis (strain ATCC 15697 / DSM 20088 / JCM 1222 / NCTC 11817 / S12).